The sequence spans 287 residues: Eukaryotic translation initiation factor 3 subunit G (287 aa).

The disordered stretch occupies residues E163–E207. The 79-residue stretch at N208 to F286 folds into the RRM domain.

Belongs to the eIF-3 subunit G family. Component of the eukaryotic translation initiation factor 3 (eIF-3) complex.

Its subcellular location is the cytoplasm. Its function is as follows. RNA-binding component of the eukaryotic translation initiation factor 3 (eIF-3) complex, which is involved in protein synthesis of a specialized repertoire of mRNAs and, together with other initiation factors, stimulates binding of mRNA and methionyl-tRNAi to the 40S ribosome. The eIF-3 complex specifically targets and initiates translation of a subset of mRNAs involved in cell proliferation. This subunit can bind 18S rRNA. The sequence is that of Eukaryotic translation initiation factor 3 subunit G from Brugia malayi (Filarial nematode worm).